The chain runs to 316 residues: MACQCFLVGAGYVALAAVAYRLLTIFSNILGPYVLLSPIDLKKRAGASWAVVTGATDGIGKAYAFELARRGFNVLLVSRTQSKLDETKKEILEKYSSIEVRTAAFDFTNAAPSAYKDLLATLNQVEIGVLINNVGMSYEYPDVLHKVDGGIERLANITTINTLPPTLLSAGILPQMVARKAGVIVNVGSSAGANQMALWAVYSATKKYVSWLTAILRKEYEHQGITVQTIAPMMVATKMSKVKRTSFFTPDGAVFAKSALNTVGNTSDTTGYITHQLQLELMDLIPTFIRDKILTNMSVGTRAAALRKKEREAKSQ.

NADP(+) is bound by residues 47–76 (ASWAVVTGATDGIGKAYAFELARRGFNVLL) and Asp106. Position 189 (Ser189) interacts with substrate. Tyr202 serves as the catalytic Proton acceptor. Residue Lys206 coordinates NADP(+).

The protein belongs to the short-chain dehydrogenases/reductases (SDR) family. 17-beta-HSD 3 subfamily. Expressed in the gut of larva and adult.

It carries out the reaction a very-long-chain (3R)-3-hydroxyacyl-CoA + NADP(+) = a very-long-chain 3-oxoacyl-CoA + NADPH + H(+). It catalyses the reaction (omega-1)-methyl-(3R)-hydroxy-fatty acyl-CoA + NADP(+) = (omega-1)-methyl-3-oxo-fatty acyl-CoA + NADPH + H(+). The catalysed reaction is a 17beta-hydroxy steroid + NADP(+) = a 17-oxo steroid + NADPH + H(+). It participates in lipid metabolism; fatty acid biosynthesis. Functionally, required for branched-chain fatty acid synthesis (such as (omega-1)-methyl-fatty acids). Catalyzes the reduction of the 3-keto-fatty acyl-CoA intermediate that is formed in each cycle of fatty acid elongation. Very long-chain fatty acids (VLCFAs) serve as precursors for ceramide and sphingolipids. Involved in hormone production as it metabolizes 4-androstendione (androst-4-ene-3,17-dione) into testosterone and estrone into estradiol (17beta-estradiol) in vitro, but the physiological steroid substrate is unknown. This Caenorhabditis elegans protein is Very-long-chain 3-oxooacyl-coA reductase let-767 (let-767).